The sequence spans 93 residues: MTLQDLLDRILGRQPASATTARERLQLVLAHDRSDLSPELLDQMRREIFEVVAKYVDIDLEEGDVTLETEDRVTALVANLPIRRSMASSKPGS.

The protein belongs to the MinE family.

Functionally, prevents the cell division inhibition by proteins MinC and MinD at internal division sites while permitting inhibition at polar sites. This ensures cell division at the proper site by restricting the formation of a division septum at the midpoint of the long axis of the cell. The sequence is that of Cell division topological specificity factor from Synechococcus sp. (strain WH7803).